The sequence spans 337 residues: MRVYNKSRIVGQLLFVALGITFIYYLFTPSVNSNAKVQIENRGGNSYEIYDMNKITESSDPIRNKEEVLILTPIARFYPQYWKNLLELDYPRNLISLGFIVPSSKDGAKVHRELRNAINAVQKGPGDKRFADVKILIQDSDLSSGQSEAERHKFSAQKERRGKLAATRNTLLLSTLKPSTSWVLWLDSDIVETPSTLIQDLAEHNEDVLVANCFQKQGDKLTPYDFNSWVDSQTAQELASHMDRDEILLEGYAELPTYRMLMAKIYEEHKDPSTIMALDGVGTTALLVKASVHRDGALFPTFPFYHLIESEGFAKMAKRLGHGVYGLPYYLVFHHNE.

At methionine 1–arginine 8 the chain is on the cytoplasmic side. A helical; Signal-anchor for type II membrane protein membrane pass occupies residues isoleucine 9 to proline 29. Residues serine 30 to glutamate 337 are Lumenal-facing.

Belongs to the ANP1/MMN9/VAN1 family.

The protein localises to the endoplasmic reticulum membrane. It localises to the golgi apparatus membrane. The protein operates within protein modification; protein glycosylation. In terms of biological role, required for the addition of the long alpha 1,6-mannose backbone of N-linked glycans on cell wall and periplasmic proteins. In Schizosaccharomyces pombe (strain 972 / ATCC 24843) (Fission yeast), this protein is Mannan polymerase complex subunit mnn9.